We begin with the raw amino-acid sequence, 347 residues long: GMP reductase (347 aa).

108–131 (ADFQKTKDIMAISDEFIFICIDIA) provides a ligand contact to NADP(+). K(+)-binding residues include glycine 181 and glycine 183. Cysteine 186 (thioimidate intermediate) is an active-site residue. An NADP(+)-binding site is contributed by 216-239 (IIGDGGCSCAGDVAKAFGGGADFV).

It belongs to the IMPDH/GMPR family. GuaC type 1 subfamily. As to quaternary structure, homotetramer.

It carries out the reaction IMP + NH4(+) + NADP(+) = GMP + NADPH + 2 H(+). Functionally, catalyzes the irreversible NADPH-dependent deamination of GMP to IMP. It functions in the conversion of nucleobase, nucleoside and nucleotide derivatives of G to A nucleotides, and in maintaining the intracellular balance of A and G nucleotides. The polypeptide is GMP reductase (Vibrio campbellii (strain ATCC BAA-1116)).